The sequence spans 209 residues: ATP-dependent dethiobiotin synthetase BioD (209 aa).

Residue 13-18 (DIGKTV) coordinates ATP. Residue T17 participates in Mg(2+) binding. The active site involves K33. Positions 47 and 100 each coordinate Mg(2+). Residues 100-103 (EGAG) and 184-186 (PRL) contribute to the ATP site.

It belongs to the dethiobiotin synthetase family. In terms of assembly, homodimer. Mg(2+) serves as cofactor.

It localises to the cytoplasm. It carries out the reaction (7R,8S)-7,8-diammoniononanoate + CO2 + ATP = (4R,5S)-dethiobiotin + ADP + phosphate + 3 H(+). It participates in cofactor biosynthesis; biotin biosynthesis; biotin from 7,8-diaminononanoate: step 1/2. In terms of biological role, catalyzes a mechanistically unusual reaction, the ATP-dependent insertion of CO2 between the N7 and N8 nitrogen atoms of 7,8-diaminopelargonic acid (DAPA, also called 7,8-diammoniononanoate) to form a ureido ring. In Rhodopseudomonas palustris (strain BisB18), this protein is ATP-dependent dethiobiotin synthetase BioD.